The following is a 153-amino-acid chain: Large ribosomal subunit protein uL15 (153 aa).

Residues 21–40 (RGIGSGKGKTGGRGIKGQKS) are disordered. Positions 23–35 (IGSGKGKTGGRGI) are enriched in gly residues.

It belongs to the universal ribosomal protein uL15 family. As to quaternary structure, part of the 50S ribosomal subunit.

Binds to the 23S rRNA. This chain is Large ribosomal subunit protein uL15, found in Rickettsia canadensis (strain McKiel).